A 183-amino-acid polypeptide reads, in one-letter code: Seminal plasma protein BSP-30 kDa (183 aa).

Residues 1 to 25 form the signal peptide; it reads MAPLVGLFLIWAGASVFQQLHPVNG. Residues 23–47 form a disordered region; it reads VNGGDIPDPGSKPTPPGMADELPTE. O-linked (GalNAc...) threonine glycans are attached at residues threonine 36, threonine 46, threonine 57, threonine 58, threonine 59, and threonine 64. Fibronectin type-II domains lie at 92-136 and 137-183; these read FEGP…FCTE and RDEP…WKYC. 4 cysteine pairs are disulfide-bonded: cysteine 97/cysteine 121, cysteine 111/cysteine 134, cysteine 142/cysteine 168, and cysteine 156/cysteine 183.

The protein belongs to the seminal plasma protein family.

The protein resides in the secreted. Its function is as follows. Binds to spermatozoa upon ejaculation and may play a role in sperm capacitation. Displays heparin-, gelatin- and phospholipid-binding activities. This Bos taurus (Bovine) protein is Seminal plasma protein BSP-30 kDa.